A 754-amino-acid chain; its full sequence is MMSTYKRATLDEEDLVDSLSEGEVYPNGLQVNFRNFRSSQRCWATRTQVEKRLIVLVALLAAGLVACLTALGIQYRTRTPPVCLSEACVSVTSSILNSMNPTVDPCQDFFSYACGGWIKANPVPDGHSRWGAFSNLWEHNQAIIKHLLENSTASVSEAERKAQVYYRACMNETRIEELRAKPLMELIEKLGGWNITGPWAKDNFQDTLQVVTAHYRTSPFFSVYVSADSKNSNRNVIHVDQSGLGLPSRDYYLNKTENEKVLNGYLNYMVQLGKLLGGGDENAIRAQMQQILDFETALANITIPQEKRRDEELIYHKVTAAELQTLAPAINWLPFLNTIFYPVEINESEPIVVYDKEYLEQVSTLINTTDKCLLNNYMIWNLVRKTSSFLDQRFQDADEKFMEVMYGTKKTCLPRWKFCVSDTENNLGFGLGPMFVKATFAEDSKNIASEIILEIKKAFEESLSTLKWMDEDTRKSAKEKADAIYNMIGYPNFIMDPKELDKVFNDYTAVPDLYFENAMRFFNFSWRVTAEQLRKAPNRDQWSMTPPMVNAYYSPTKNEIVFPAGILPAPFYTRSSPKALNFGGIGVVVGHELTHAFDDQGREYDKDGNLRPWWKNSSVEAFKQQTECMVEQYSNYSVNGEPVNGRHTLGENIADNGGLKAAYRAYQNWVKKNGAEETLPTLGLTNNQLFFLGFAQVWCSVRTPESSHEGLITDPHSPSRFRVIGSLSNSKEFSEHFQCPPGSPMNPRHKCEVW.

Topologically, residues 1–52 (MMSTYKRATLDEEDLVDSLSEGEVYPNGLQVNFRNFRSSQRCWATRTQVEKR) are cytoplasmic. Thr9 bears the Phosphothreonine mark. The helical; Signal-anchor for type II membrane protein transmembrane segment at 53–73 (LIVLVALLAAGLVACLTALGI) threads the bilayer. The Extracellular segment spans residues 74–754 (QYRTRTPPVC…MNPRHKCEVW (681 aa)). A Peptidase M13 domain is found at 82–754 (VCLSEACVSV…MNPRHKCEVW (673 aa)). Disulfide bonds link Cys83/Cys88, Cys106/Cys739, Cys114/Cys699, Cys169/Cys419, and Cys628/Cys751. N-linked (GlcNAc...) asparagine glycans are attached at residues Asn150, Asn171, Asn194, Asn254, Asn300, Asn346, Asn367, and Asn523. A Zn(2+)-binding site is contributed by His591. Glu592 is a catalytic residue. His595 lines the Zn(2+) pocket. N-linked (GlcNAc...) asparagine glycans are attached at residues Asn616 and Asn635. Glu651 is a Zn(2+) binding site. Residue Asp655 is the Proton donor of the active site.

This sequence belongs to the peptidase M13 family. In terms of assembly, homodimer; disulfide-linked. Interacts with PPP1R16B. Interacts with TSPAN8; this interaction recruits the endothelin converting enzyme ECE1 to tetraspanin-enriched microdomains and positively modulates its enzymatic activity. The cofactor is Zn(2+).

It is found in the cell membrane. The catalysed reaction is Hydrolysis of the 21-Trp-|-Val-22 bond in big endothelin to form endothelin 1.. Its activity is regulated as follows. Inhibited by phosphoramidon. Converts big endothelin-1 to endothelin-1. The chain is Endothelin-converting enzyme 1 (ECE1) from Cavia porcellus (Guinea pig).